The following is a 956-amino-acid chain: Ubiquitin carboxyl-terminal hydrolase CYLD (956 aa).

Residues 106-593 (CEERFSLFKN…LEIMIGKKKG (488 aa)) form an interaction with TRIP region. 2 consecutive CAP-Gly domains span residues 153-198 (LAER…VFVA) and 253-286 (DVLPGKESLGYFVGVDMDNPIGNWDGRFDGVQLC). Residues 309–353 (SVTQERRPPKLAFMSRGVGDKGSSSHNKPKATGSTSDPGNRNRSE) form a disordered region. The span at 330-349 (GSSSHNKPKATGSTSDPGNR) shows a compositional bias: polar residues. Residue Ser-387 is modified to Phosphoserine. The interval 392 to 411 (STDFDRSSPPLQPPPVNSLS) is disordered. The tract at residues 394 to 469 (DFDRSSPPLQ…LAMPPGNSHG (76 aa)) is interaction with TRAF2. 2 positions are modified to phosphoserine: Ser-418 and Ser-422. The interaction with IKBKG/NEMO stretch occupies residues 470 to 684 (LEVGSLAEVK…FTSEEKDPEE (215 aa)). In terms of domain architecture, CAP-Gly 3 spans 492 to 535 (GQPPGLNEVLAGLELEDECAGCTDGTFRGTRYFTCALKKALFVK). Positions 592–950 (KGIQGHYNSC…DAYMCMYQSP (359 aa)) constitute a USP domain. Cys-601 acts as the Nucleophile in catalysis. A B-box region spans residues 781-833 (LEDTPRQCRICGGLAMYECRECYDDPDISAGKIKQFCKTCNTQVHLHPKRLNH). Cys-788, Cys-791, Cys-799, Cys-802, Cys-817, Cys-820, His-825, and His-833 together coordinate Zn(2+). The Proton acceptor role is filled by His-871.

Belongs to the peptidase C19 family. As to quaternary structure, interacts (via CAP-Gly domain) with IKBKG/NEMO (via proline-rich C-terminal region). Interacts with TRAF2 and TRIP. Interacts with PLK1, DVL1, DVL3, MAVS, TBK1, IKKE and RIGI. Interacts (via CAP-Gly domain) with microtubules. Interacts with HDAC6 and BCL3. Interacts with MAP3K7. Identified in a complex with TRAF6 and SQSTM1. Interacts with OPTN and SQSTM1. Interacts with CEP350. Interacts with RNF31; the interaction is indirect and is mediated via SPATA2. Interacts with SPATA2 (via the PUB domain); the interaction is direct and recruits CYLD to the LUBAC complex, thereby regulating TNF-alpha-induced necroptosis. Phosphorylated on several serine residues by IKKA and/or IKKB in response to immune stimuli. Phosphorylation requires IKBKG. Phosphorylation abolishes TRAF2 deubiquitination, interferes with the activation of Jun kinases, and strongly reduces CD40-dependent gene activation by NF-kappa-B. In terms of processing, ubiquitinated. Polyubiquitinated in hepatocytes treated with palmitic acid. Ubiquitination is mediated by E3 ligase TRIM47 and leads to proteasomal degradation.

The protein resides in the cytoplasm. It is found in the perinuclear region. The protein localises to the cytoskeleton. Its subcellular location is the cell membrane. It localises to the microtubule organizing center. The protein resides in the centrosome. It is found in the spindle. The protein localises to the cilium basal body. It carries out the reaction Thiol-dependent hydrolysis of ester, thioester, amide, peptide and isopeptide bonds formed by the C-terminal Gly of ubiquitin (a 76-residue protein attached to proteins as an intracellular targeting signal).. Functionally, deubiquitinase that specifically cleaves 'Lys-63'- and linear 'Met-1'-linked polyubiquitin chains and is involved in NF-kappa-B activation and TNF-alpha-induced necroptosis. Negatively regulates NF-kappa-B activation by deubiquitinating upstream signaling factors. Contributes to the regulation of cell survival, proliferation and differentiation via its effects on NF-kappa-B activation. Negative regulator of Wnt signaling. Inhibits HDAC6 and thereby promotes acetylation of alpha-tubulin and stabilization of microtubules. Plays a role in the regulation of microtubule dynamics, and thereby contributes to the regulation of cell proliferation, cell polarization, cell migration, and angiogenesis. Required for normal cell cycle progress and normal cytokinesis. Inhibits nuclear translocation of NF-kappa-B. Plays a role in the regulation of inflammation and the innate immune response, via its effects on NF-kappa-B activation. Dispensable for the maturation of intrathymic natural killer cells, but required for the continued survival of immature natural killer cells. Negatively regulates TNFRSF11A signaling and osteoclastogenesis. Involved in the regulation of ciliogenesis, allowing ciliary basal bodies to migrate and dock to the plasma membrane; this process does not depend on NF-kappa-B activation. Ability to remove linear ('Met-1'-linked) polyubiquitin chains regulates innate immunity and TNF-alpha-induced necroptosis: recruited to the LUBAC complex via interaction with SPATA2 and restricts linear polyubiquitin formation on target proteins. Regulates innate immunity by restricting linear polyubiquitin formation on RIPK2 in response to NOD2 stimulation. Involved in TNF-alpha-induced necroptosis by removing linear ('Met-1'-linked) polyubiquitin chains from RIPK1, thereby regulating the kinase activity of RIPK1. Negatively regulates intestinal inflammation by removing 'Lys-63' linked polyubiquitin chain of NLRP6, thereby reducing the interaction between NLRP6 and PYCARD/ASC and formation of the NLRP6 inflammasome. Does not catalyze deubiquitination of heterotypic 'Lys-63'-/'Lys-48'-linked branched ubiquitin chains. Removes 'Lys-63' linked polyubiquitin chain of MAP3K7, which inhibits phosphorylation and blocks downstream activation of the JNK-p38 kinase cascades. Also removes 'Lys-63'-linked polyubiquitin chains of MAP3K1 and MA3P3K3, which inhibit their interaction with MAP2K1 and MAP2K2. This is Ubiquitin carboxyl-terminal hydrolase CYLD (CYLD) from Pongo abelii (Sumatran orangutan).